The sequence spans 1048 residues: MSHFLTFCFLSLLLLLHGANAVTETELRSLLEFRKGIRDETSHQRISWSDTSSLTDPSTCPNDWPGISCDPETGSIIAINLDRRGLSGELKFSTLSGLTRLRNLSLSGNSFSGRVVPSLGGISSLQHLDLSDNGFYGPIPGRISELWSLNHLNLSSNKFEGGFPSGFRNLQQLRSLDLHKNEIWGDVGEIFTELKNVEFVDLSCNRFNGGLSLPMENISSISNTLRHLNLSHNALNGKFFSEESIGSFKNLEIVDLENNQINGELPHFGSQPSLRILKLARNELFGLVPQELLQSSIPLLELDLSRNGFTGSISEINSSTLTMLNLSSNGLSGDLPSSFKSCSVIDLSGNTFSGDVSVVQKWEATPDVLDLSSNNLSGSLPNFTSAFSRLSVLSIRNNSVSGSLPSLWGDSQFSVIDLSSNKFSGFIPVSFFTFASLRSLNLSRNNLEGPIPFRGSRASELLVLNSYPQMELLDLSTNSLTGMLPGDIGTMEKIKVLNLANNKLSGELPSDLNKLSGLLFLDLSNNTFKGQIPNKLPSQMVGFNVSYNDLSGIIPEDLRSYPPSSFYPGNSKLSLPGRIPADSSGDLSLPGKKHHSKLSIRIAIIVASVGAAIMILFVLFAYHRTQLKDFHGRNRFTDQATTRDTKFGRSSRPSLFNFSSNVEQQSSSLSFSNDHLLTANSRSLSGIPGCEAEISEQGAPATSAPTNLLDDYPAASGRKSSSGGSPLSSSPRFSDQPVMLDVYSPDRLAGELFFLDVSLKLTAEELSRAPAEVLGRSSHGTLYKATLDNGHMLTVKWLRVGLVRHKKDFAREAKKIGSLKHPNIVPLRAYYWGPREQERLLLSDYLRGESLAMHLYETTPRRYSPMSFSQRLKVAVEVAQCLLYLHDRAMPHGNLKPTNIILSSPDNTVRITDYCVHRLMTPSGVAEQILNMSALGYSAPELSSASKPIPTLKSDVYAFGVILMELLTRRSAGDIISGQTGAVDLTDWVRLCDQEGRRMDCIDRDIAGGEEFSKGMEDALAVAIRCILSVNERPNIRQVLDHLTSISA.

The N-terminal stretch at Met-1–Ala-21 is a signal peptide. 18 LRR repeats span residues Arg-100 to Gly-120, Ser-124 to Leu-146, Ser-148 to Asn-169, Gln-172 to Leu-194, Asn-196 to Asn-217, Thr-224 to Gly-246, Asn-250 to Pro-272, Ser-273 to Gln-294, Pro-298 to Ser-319, Thr-320 to Cys-342, Thr-365 to Phe-387, Arg-389 to Ser-411, Gln-412 to Thr-433, Ser-436 to Arg-457, Gln-469 to Met-491, Lys-493 to Ser-516, Gly-517 to Gln-539, and Met-540 to Ser-560. A helical membrane pass occupies residues Ile-602–Tyr-622. The segment at Glu-696–Phe-733 is disordered. Low complexity predominate over residues Ser-716–Phe-733. Ser-744 is modified (phosphoserine). The 278-residue stretch at Arg-768–Ser-1045 folds into the Protein kinase domain. Residues Leu-774–Leu-782 and Lys-796 each bind ATP.

It belongs to the protein kinase superfamily.

It localises to the membrane. This Arabidopsis thaliana (Mouse-ear cress) protein is Probable inactive receptor kinase At5g10020.